The following is a 272-amino-acid chain: Dioscorin DB3L (272 aa).

The signal sequence occupies residues 1-25 (MSSSTLFHLFLLSSLLFSCLSNARP). Residues 28–263 (DDFSYIEGSP…LKFRTIFFYP (236 aa)) enclose the Alpha-carbonic anhydrase domain. An intrachain disulfide couples cysteine 53 to cysteine 213.

Belongs to the alpha-class carbonic anhydrase family. As to quaternary structure, homodimer; disulfide-linked. Not glycosylated. Expressed in tuber (at protein level).

Loss of hemagglutinating activity by EDTA treatment. The activity is fully recovered by the addition of 5 mM Ca(2+) ions, but not with Mg(2+) and Mn 2(+). Hemagglutination activity is inhibited by maltose and its derivatives, with maltopentaose and maltohexaose being the best inhibitors followed by maltose and iso maltose. Not inhibited by glycoproteins. Its function is as follows. Maltose-binding lectin. No affinity is detected toward glucose. Has hemagglutinating activity against rabbit erythrocytes at 3.9 ug/ml. No carbonate dehydratase or trypsin inhibitor activity detected by measuring the hydrolysis of 4-nitrophenyl acetate or the inhibition of bovine trypsin-catalyzed hydrolysis of N-benzoyl-L-arginine ethyl ester, respectively. The chain is Dioscorin DB3L from Dioscorea polystachya (Chinese yam).